The chain runs to 210 residues: tRNA (guanine-N(7)-)-methyltransferase (210 aa).

4 residues coordinate S-adenosyl-L-methionine: glutamate 36, glutamate 61, aspartate 90, and aspartate 112. Aspartate 112 is an active-site residue. Residues lysine 116, aspartate 148, and 188 to 191 each bind substrate; that span reads TEYE.

The protein belongs to the class I-like SAM-binding methyltransferase superfamily. TrmB family.

The enzyme catalyses guanosine(46) in tRNA + S-adenosyl-L-methionine = N(7)-methylguanosine(46) in tRNA + S-adenosyl-L-homocysteine. It participates in tRNA modification; N(7)-methylguanine-tRNA biosynthesis. Catalyzes the formation of N(7)-methylguanine at position 46 (m7G46) in tRNA. This Mycoplasma pneumoniae (strain ATCC 29342 / M129 / Subtype 1) (Mycoplasmoides pneumoniae) protein is tRNA (guanine-N(7)-)-methyltransferase.